Reading from the N-terminus, the 456-residue chain is tRNA modification GTPase MnmE (456 aa).

Positions 24, 81, and 120 each coordinate (6S)-5-formyl-5,6,7,8-tetrahydrofolate. The TrmE-type G domain maps to 216 to 379 (GMKVVIAGRP…LREHLKECIG (164 aa)). Asn226 contacts K(+). Residues 226 to 231 (NAGKSS), 245 to 251 (TAIEGTT), and 270 to 273 (DTAG) contribute to the GTP site. Ser230 contributes to the Mg(2+) binding site. Positions 245, 247, and 250 each coordinate K(+). Thr251 provides a ligand contact to Mg(2+). Residue Lys456 coordinates (6S)-5-formyl-5,6,7,8-tetrahydrofolate.

This sequence belongs to the TRAFAC class TrmE-Era-EngA-EngB-Septin-like GTPase superfamily. TrmE GTPase family. In terms of assembly, homodimer. Heterotetramer of two MnmE and two MnmG subunits. It depends on K(+) as a cofactor.

It localises to the cytoplasm. In terms of biological role, exhibits a very high intrinsic GTPase hydrolysis rate. Involved in the addition of a carboxymethylaminomethyl (cmnm) group at the wobble position (U34) of certain tRNAs, forming tRNA-cmnm(5)s(2)U34. The chain is tRNA modification GTPase MnmE from Marinobacter nauticus (strain ATCC 700491 / DSM 11845 / VT8) (Marinobacter aquaeolei).